Consider the following 459-residue polypeptide: MSEMTARFSEIVGNANLLTGDAIPEDYAHDEELTGPPQKPAYAAKPATPEEVAQLLKAASENGVPVTARGSGCGLSGAARPVEGGLLISFDRMNKVLEVDTANQVAVVQPGVALTDLDAATADTGLRYTVYPGELSSSVGGNVGTNAGGMRAVKYGVARHNVLGLQAVLPTGEIIRTGGRMAKVSTGYDLTQLIIGSEGTLALVTEVIVKLHPRLDHNASVLAPFADFDQVMAAVPKILASGLAPDILEYIDNTSMAALISTQNLELGIPDQIRDSCEAYLLVALENRIADRLFEDIQTVGEMLMELGAVDAYVLEGGSARKLIEAREKAFWAAKALGADDIIDTVVPRASMPKFLSTARGLAAAADGAAVGCGHAGDGNVHMAIACKDPEKKKKLMTDIFALAMELGGAISGEHGVGRAKTGYFLELEDPVKISLMRRIKQSFDPAGILNPGVVFGDT.

Residues 28–47 are disordered; the sequence is AHDEELTGPPQKPAYAAKPA. The 180-residue stretch at 35–214 folds into the FAD-binding PCMH-type domain; the sequence is GPPQKPAYAA…TEVIVKLHPR (180 aa).

Belongs to the oxygen-dependent FAD-linked oxidoreductase family. Requires FAD as cofactor.

This is an uncharacterized protein from Mycobacterium tuberculosis (strain CDC 1551 / Oshkosh).